Consider the following 83-residue polypeptide: MSSGGLLLLLGLLTLWEVLTPVSSTDRPDFCELPEDSGSCKGNFEAFYYNSDQHQCLEFIYGGCDGNANNFKTIEECKLTCAA.

A signal peptide spans 1 to 24; the sequence is MSSGGLLLLLGLLTLWEVLTPVSS. Residues 31–81 form the BPTI/Kunitz inhibitor domain; it reads CELPEDSGSCKGNFEAFYYNSDQHQCLEFIYGGCDGNANNFKTIEECKLTC. 3 disulfide bridges follow: C31/C81, C40/C64, and C56/C77.

The protein belongs to the venom Kunitz-type family. Expressed by the venom gland.

Its subcellular location is the secreted. Its function is as follows. Serine protease inhibitor. The polypeptide is Kunitz-type serine protease inhibitor nigrescinin-6 (Cryptophis nigrescens (Eastern small-eyed snake)).